The primary structure comprises 297 residues: Carboxysome assembly protein CcmO (297 aa).

A disordered region spans residues 1 to 29; it reads MPTSPTMTSVPIARSPRPSYQQINQHQPS. Polar residues predominate over residues 18-29; that stretch reads PSYQQINQHQPS. 2 BMC domains span residues 32–116 and 138–222; these read ALGL…AVFP and SIGL…HTLP.

It belongs to the bacterial microcompartments protein family. In terms of assembly, homooligomerizes, possibly as a trimer, interacts with CcmK in the carboxysome.

It localises to the carboxysome. Required for formation of the carboxysome, a polyhedral inclusion where RuBisCO (ribulose bisphosphate carboxylase, rbcL-rbcS) is sequestered. Required for recruitment of major shell protein CcmK2 to the pre-carboxysome. Suggested to be a carboxysome shell protein. In Synechocystis sp. (strain ATCC 27184 / PCC 6803 / Kazusa), this protein is Carboxysome assembly protein CcmO.